Consider the following 155-residue polypeptide: uncharacterized protein (155 aa).

Disordered regions lie at residues methionine 1–phenylalanine 22 and asparagine 110–alanine 155. An N-acetylserine modification is found at serine 2. Serine 136, serine 144, and serine 146 each carry phosphoserine. The span at serine 136–alanine 155 shows a compositional bias: acidic residues.

This is an uncharacterized protein from Mus musculus (Mouse).